Reading from the N-terminus, the 306-residue chain is Peroxisome biogenesis factor 10 (306 aa).

Residues 1-52 are Peroxisomal matrix-facing; sequence MHLSAHIDPLQIILCTEIDEACIQFIKSQIEGIARACGPRMQANFEGVLIPY. A helical membrane pass occupies residues 53 to 84; sequence VDVLGKFLYRACCLRYATMGEEAARIVLAKQD. Over 85-147 the chain is Cytoplasmic; sequence RSKGLVLATT…PEAVISKEKH (63 aa). Residues 148–174 form a helical membrane-spanning segment; sequence LVYILNSFKPILLKLVSIIRFLCLTMK. The Peroxisomal matrix segment spans residues 175-202; that stretch reads GHCATVSQLLLGLKYISLDEINPEEKKK. A helical transmembrane segment spans residues 203-219; that stretch reads VLTLLLLLGSRLIASIL. Over 220–306 the chain is Cytoplasmic; it reads QHSNSYFDQH…SSPSKIILLR (87 aa). The Zn(2+) site is built by cysteine 256, cysteine 259, cysteine 271, histidine 273, cysteine 276, cysteine 279, cysteine 290, and cysteine 293. Residues 256-294 form an RING-type zinc finger; sequence CSLCMEFIHCPAATECGHIFCWSCINGWTSKKSECPLCR.

It belongs to the pex2/pex10/pex12 family. As to quaternary structure, component of the PEX2-PEX10-PEX12 retrotranslocation channel, composed of PEX2, PEX10 and PEX12.

It localises to the peroxisome membrane. The enzyme catalyses S-ubiquitinyl-[E2 ubiquitin-conjugating enzyme]-L-cysteine + [acceptor protein]-L-lysine = [E2 ubiquitin-conjugating enzyme]-L-cysteine + N(6)-ubiquitinyl-[acceptor protein]-L-lysine.. It functions in the pathway protein modification; protein ubiquitination. The E3 ubiquitin-protein ligase activity is stimulated by PEX12. Its function is as follows. E3 ubiquitin-protein ligase component of a retrotranslocation channel required for peroxisome organization by mediating export of the PEX5 receptor from peroxisomes to the cytosol, thereby promoting PEX5 recycling. The retrotranslocation channel is composed of PEX2, PEX10 and PEX12; each subunit contributing transmembrane segments that coassemble into an open channel that specifically allows the passage of PEX5 through the peroxisomal membrane. PEX10 also regulates PEX5 recycling by acting as a E3 ubiquitin-protein ligase. When PEX5 recycling is compromised, PEX10 catalyzes polyubiquitination of PEX5 during its passage through the retrotranslocation channel, leading to its degradation. This is Peroxisome biogenesis factor 10 (pas4) from Schizosaccharomyces pombe (strain 972 / ATCC 24843) (Fission yeast).